Here is a 262-residue protein sequence, read N- to C-terminus: Expansin-A13 (262 aa).

Residues M1 to A22 form the signal peptide. Residues G52–G167 form the Expansin-like EG45 domain. Residues Y177–S257 enclose the Expansin-like CBD domain.

The protein belongs to the expansin family. Expansin A subfamily. In terms of tissue distribution, expressed in roots and flowers.

It localises to the secreted. The protein resides in the cell wall. Its subcellular location is the membrane. In terms of biological role, may cause loosening and extension of plant cell walls by disrupting non-covalent bonding between cellulose microfibrils and matrix glucans. No enzymatic activity has been found. May be required for rapid internodal elongation in deepwater rice during submergence. This Oryza sativa subsp. japonica (Rice) protein is Expansin-A13 (EXPA13).